The primary structure comprises 747 residues: DNA ligase (747 aa).

NAD(+)-binding positions include 33 to 37, 83 to 84, and Glu113; these read DEEYD and SL. Lys115 functions as the N6-AMP-lysine intermediate in the catalytic mechanism. Arg136, Glu174, Lys299, and Lys323 together coordinate NAD(+). Zn(2+) is bound by residues Cys417, Cys420, Cys436, and Cys442. The BRCT domain maps to 659-747; the sequence is TGGGVLSGLT…GPGALPEVAE (89 aa).

This sequence belongs to the NAD-dependent DNA ligase family. LigA subfamily. It depends on Mg(2+) as a cofactor. The cofactor is Mn(2+).

It catalyses the reaction NAD(+) + (deoxyribonucleotide)n-3'-hydroxyl + 5'-phospho-(deoxyribonucleotide)m = (deoxyribonucleotide)n+m + AMP + beta-nicotinamide D-nucleotide.. Its function is as follows. DNA ligase that catalyzes the formation of phosphodiester linkages between 5'-phosphoryl and 3'-hydroxyl groups in double-stranded DNA using NAD as a coenzyme and as the energy source for the reaction. It is essential for DNA replication and repair of damaged DNA. In Leifsonia xyli subsp. xyli (strain CTCB07), this protein is DNA ligase.